A 317-amino-acid chain; its full sequence is Transaldolase (317 aa).

The active-site Schiff-base intermediate with substrate is K126.

This sequence belongs to the transaldolase family. Type 1 subfamily. As to quaternary structure, homodimer.

It is found in the cytoplasm. The enzyme catalyses D-sedoheptulose 7-phosphate + D-glyceraldehyde 3-phosphate = D-erythrose 4-phosphate + beta-D-fructose 6-phosphate. It functions in the pathway carbohydrate degradation; pentose phosphate pathway; D-glyceraldehyde 3-phosphate and beta-D-fructose 6-phosphate from D-ribose 5-phosphate and D-xylulose 5-phosphate (non-oxidative stage): step 2/3. In terms of biological role, transaldolase is important for the balance of metabolites in the pentose-phosphate pathway. The polypeptide is Transaldolase (Burkholderia multivorans (strain ATCC 17616 / 249)).